Consider the following 253-residue polypeptide: HTH-type transcriptional regulator AdiY (253 aa).

The region spanning 149–246 (DSVYQIIESD…GMTPLHYVSQ (98 aa)) is the HTH araC/xylS-type domain. DNA-binding regions (H-T-H motif) lie at residues 166–187 (SMVASCLCLSPSLLKKKLKSEN) and 213–236 (ISQVSQSCGYNSTSYFISVFKDFY).

The protein is HTH-type transcriptional regulator AdiY (adiY) of Escherichia coli (strain K12).